Reading from the N-terminus, the 331-residue chain is MATPHHSRRGSMAYYPRVRAKSIEPRIRSWPEISGPVKVQGFAGFKVGMTHVEMVDYRKTSVTAGQPIFVPVTVIEVPPLDVIGIRLYDEDEEGNMVVVYEKWTQNLDKELFKKITTFKEVKEKPVPETYADVRLIVATRNKDVPGIPSKKPEIFELRIGGGNSVKERFEYATAHLGKTIRFEDFSKPGKFVDVLSVTKGKGFTGHVQRFGVKLLPRKNRKHRRMIGTLGPWHPDWVRNTVPQAGQMGYQQRTISNVRVLKYSKGEDADTINVRGGFLHYGLVKNDYVLLFGSVPGPAKRLIKMRDPARQKVPDIDNVKLDYISLESKQGD.

The protein belongs to the universal ribosomal protein uL3 family. As to quaternary structure, part of the 50S ribosomal subunit. Forms a cluster with proteins L14 and L24e.

One of the primary rRNA binding proteins, it binds directly near the 3'-end of the 23S rRNA, where it nucleates assembly of the 50S subunit. The protein is Large ribosomal subunit protein uL3 of Thermoplasma volcanium (strain ATCC 51530 / DSM 4299 / JCM 9571 / NBRC 15438 / GSS1).